Here is a 418-residue protein sequence, read N- to C-terminus: Fumarylacetoacetase (418 aa).

Aspartate 127 is a Ca(2+) binding site. Catalysis depends on histidine 134, which acts as the Proton acceptor. Positions 200, 202, and 235 each coordinate Ca(2+). The Mg(2+) site is built by aspartate 235, lysine 255, and threonine 259.

Belongs to the FAH family. Requires Ca(2+) as cofactor. The cofactor is Mg(2+). In terms of tissue distribution, highly expressed in the intestine and the hypodermis.

It catalyses the reaction 4-fumarylacetoacetate + H2O = acetoacetate + fumarate + H(+). The protein operates within amino-acid degradation; L-phenylalanine degradation; acetoacetate and fumarate from L-phenylalanine: step 6/6. Functionally, fumarylacetoacetase involved in the tyrosine degradation pathway. This Caenorhabditis elegans protein is Fumarylacetoacetase.